A 76-amino-acid chain; its full sequence is Mu-scoloptoxin(15)-Ssm1a (76 aa).

The N-terminal stretch at Met-1–Thr-23 is a signal peptide. The tract at residues Lys-33 to Lys-36 is important for inhibition of KCNQ4. 2 disulfides stabilise this stretch: Cys-43/Cys-69 and Cys-47/Cys-71.

This sequence belongs to the scoloptoxin-15 family. In terms of tissue distribution, expressed by the venom gland.

It localises to the secreted. Blocks voltage-gated potassium channels Kv7.4/KCNQ4 (IC(50)=2.5 uM), Kv7.1/KCNQ1 (IC(50)=2.8 uM), Kv7.2/KCNQ2 (IC(50)=2.7 uM) and Kv7.5/KCNQ5 (IC(50)=2.7 uM). Targets the pore domain, in particular negatively charged residues 'Asp-266' and 'Asp-288', of KCNQ4 and probably other KCNQ channel family members where these residues are conserved. In vivo, shows vasoconstrictive activity resulting in acute hypertension when injected intravenously in mice. Also induces coronary vasospasms ultimately leading to heart failure. Induces seizures when injected into the hippocampus of mice. Decreases respiratory rate while increasing respiratory amplitude, probably by triggering a contraction of the bronchial ring. In Scolopendra mutilans (Chinese red-headed centipede), this protein is Mu-scoloptoxin(15)-Ssm1a.